A 120-amino-acid polypeptide reads, in one-letter code: Ribonuclease P protein component 2 (120 aa).

Belongs to the eukaryotic/archaeal RNase P protein component 2 family. As to quaternary structure, consists of a catalytic RNA component and at least 4-5 protein subunits.

It localises to the cytoplasm. It carries out the reaction Endonucleolytic cleavage of RNA, removing 5'-extranucleotides from tRNA precursor.. Its function is as follows. Part of ribonuclease P, a protein complex that generates mature tRNA molecules by cleaving their 5'-ends. This is Ribonuclease P protein component 2 from Methanobrevibacter smithii (strain ATCC 35061 / DSM 861 / OCM 144 / PS).